We begin with the raw amino-acid sequence, 432 residues long: Trigger factor (432 aa).

The PPIase FKBP-type domain maps to 161–246 (EDRVTIDFTG…LKKVEERELP (86 aa)).

Belongs to the FKBP-type PPIase family. Tig subfamily. As to quaternary structure, homodimer and monomer. In vivo most of the ribosomes are in complex with monomeric TF. Uncomplexed TF, however, is in a monomer-dimer equilibrium with approximately two thirds of TF existing in a dimeric state.

It is found in the cytoplasm. It carries out the reaction [protein]-peptidylproline (omega=180) = [protein]-peptidylproline (omega=0). Involved in protein export. Acts as a chaperone by maintaining the newly synthesized protein in an open conformation. Functions as a peptidyl-prolyl cis-trans isomerase. The sequence is that of Trigger factor from Escherichia coli O139:H28 (strain E24377A / ETEC).